Here is a 332-residue protein sequence, read N- to C-terminus: Phosphate acyltransferase (332 aa).

This sequence belongs to the PlsX family. Homodimer. Probably interacts with PlsY.

Its subcellular location is the cytoplasm. The catalysed reaction is a fatty acyl-[ACP] + phosphate = an acyl phosphate + holo-[ACP]. Its pathway is lipid metabolism; phospholipid metabolism. Catalyzes the reversible formation of acyl-phosphate (acyl-PO(4)) from acyl-[acyl-carrier-protein] (acyl-ACP). This enzyme utilizes acyl-ACP as fatty acyl donor, but not acyl-CoA. The polypeptide is Phosphate acyltransferase (Bacillus pumilus (strain SAFR-032)).